We begin with the raw amino-acid sequence, 338 residues long: Palmitoyltransferase ZDHHC15 (338 aa).

Residues 1 to 20 (MLAGCRVALPRGLRCCQRVL) are Cytoplasmic-facing. Residues 21–41 (SWVPVVIISLVVLWSYYAYVW) form a helical membrane-spanning segment. Over 42–56 (ELCLVTVTNPAEKAA) the chain is Lumenal. A helical membrane pass occupies residues 57-77 (YLLIFHTVFLLFIWTYWKAIF). Residues 78 to 172 (TPPKQPTKKF…NNCIGYSNYK (95 aa)) are Cytoplasmic-facing. Residues 129–179 (RFCDTCQMVKPDRCHHCSVCGMCVLKMDHHCPWVNNCIGYSNYKFFLLFLA) enclose the DHHC domain. Zn(2+) contacts are provided by C131, C134, H144, C145, C148, C151, and H158. C159 (S-palmitoyl cysteine intermediate) is an active-site residue. Position 165 (C165) interacts with Zn(2+). Residues 173–193 (FFLLFLAYAMLYCLYIGCTVF) traverse the membrane as a helical segment. The Lumenal segment spans residues 194-210 (QYFILYWTDTLSNGRAK). The helical transmembrane segment at 211-234 (FHVLFLLFVALMFFISLMFLFGYH) threads the bilayer. Residues 235–338 (CWLVSLNRTT…TSHITVHIEK (104 aa)) are Cytoplasmic-facing.

Belongs to the DHHC palmitoyltransferase family. Autopalmitoylated (in vitro).

It localises to the golgi apparatus membrane. The protein localises to the postsynaptic density. It catalyses the reaction L-cysteinyl-[protein] + hexadecanoyl-CoA = S-hexadecanoyl-L-cysteinyl-[protein] + CoA. The catalysed reaction is L-cysteinyl-[protein] + tetradecanoyl-CoA = S-tetradecanoyl-L-cysteinyl-[protein] + CoA. The enzyme catalyses L-cysteinyl-[protein] + octadecanoyl-CoA = S-octadecanoyl-L-cysteinyl-[protein] + CoA. Palmitoyltransferase that catalyzes the addition of palmitate onto various protein substrates. Has no stringent fatty acid selectivity and in addition to palmitate can also transfer onto target proteins myristate from tetradecanoyl-CoA and stearate from octadecanoyl-CoA. May thereby regulate target proteins association and localization to membranes. In the nervous system, probably catalyzes the palmitoylation of synaptic proteins and is involved in the differentiation of dopaminergic neurons and the development of the diencephalon. This Xenopus laevis (African clawed frog) protein is Palmitoyltransferase ZDHHC15 (zdhhc15).